The primary structure comprises 228 residues: Homeobox-leucine zipper protein ATHB-53 (228 aa).

The disordered stretch occupies residues 36 to 62; it reads DGGEESKPVKRRRKRRSKGSSATNEED. Residues 44-53 show a composition bias toward basic residues; it reads VKRRRKRRSK. The homeobox DNA-binding region spans 68–127; the sequence is GMLRKRKLTDEQVNMLEYSFGNEHKLESGRKEKIAGELGLDPRQVAVWFQNRRARWKNKK. The segment at 128–156 is leucine-zipper; sequence LEEEYAKLKNHHDNVVLGQCQLESQILKL.

Belongs to the HD-ZIP homeobox family. Class I subfamily. Expressed in root meristem, late flowers and siliques.

It localises to the nucleus. Its function is as follows. Probable transcription factor that may play a regulatory role in auxin/cytokinin signaling during root development. The protein is Homeobox-leucine zipper protein ATHB-53 (ATHB-53) of Arabidopsis thaliana (Mouse-ear cress).